The primary structure comprises 124 residues: Non-structural protein 2 (124 aa).

Residues 121–124 (DLNP) carry the DLNP; interaction with MAP1B motif.

The protein belongs to the pneumovirus non-structural protein 2 family. Monomer (instable). Homomultimer. Heteromultimer with NS1. Interacts with host RIGI (via N-terminus); this interaction prevents host signaling pathway involved in interferon production. Interacts with host MAP1B/microtubule-associated protein 1B.

The protein resides in the host mitochondrion. Its function is as follows. Plays a major role in antagonizing the type I IFN-mediated antiviral response. Acts cooperatively with NS1 to repress activation and nuclear translocation of host IFN-regulatory factor IRF3. Interacts with the host cytoplasmic sensor of viral nucleic acids RIGI and prevents the interaction with its downstream partner MAVS. Together with NS2, participates in the proteasomal degradation of host STAT2, IRF3, IRF7, TBK1 and RIGI through a NS-degradasome involving CUL2 and Elongin-C. The degradasome requires an intact mitochondrial MAVS. Induces host SOCS1 expression. Induces activation of NF-kappa-B. Suppresses premature apoptosis by an NF-kappa-B-dependent, interferon-independent mechanism promoting continued viral replication. In Homo sapiens (Human), this protein is Non-structural protein 2 (1B).